We begin with the raw amino-acid sequence, 1071 residues long: ATP-dependent helicase/deoxyribonuclease subunit B (1071 aa).

This sequence belongs to the helicase family. AddB/RexB type 2 subfamily. As to quaternary structure, heterodimer of AddA and RexB. It depends on Mg(2+) as a cofactor.

In terms of biological role, the heterodimer acts as both an ATP-dependent DNA helicase and an ATP-dependent, dual-direction single-stranded exonuclease. Recognizes the chi site generating a DNA molecule suitable for the initiation of homologous recombination. This subunit has 5' -&gt; 3' nuclease activity but not helicase activity. This Streptococcus pyogenes serotype M1 protein is ATP-dependent helicase/deoxyribonuclease subunit B.